We begin with the raw amino-acid sequence, 150 residues long: SsrA-binding protein (150 aa).

It belongs to the SmpB family.

The protein localises to the cytoplasm. In terms of biological role, required for rescue of stalled ribosomes mediated by trans-translation. Binds to transfer-messenger RNA (tmRNA), required for stable association of tmRNA with ribosomes. tmRNA and SmpB together mimic tRNA shape, replacing the anticodon stem-loop with SmpB. tmRNA is encoded by the ssrA gene; the 2 termini fold to resemble tRNA(Ala) and it encodes a 'tag peptide', a short internal open reading frame. During trans-translation Ala-aminoacylated tmRNA acts like a tRNA, entering the A-site of stalled ribosomes, displacing the stalled mRNA. The ribosome then switches to translate the ORF on the tmRNA; the nascent peptide is terminated with the 'tag peptide' encoded by the tmRNA and targeted for degradation. The ribosome is freed to recommence translation, which seems to be the essential function of trans-translation. In Campylobacter curvus (strain 525.92), this protein is SsrA-binding protein.